A 367-amino-acid polypeptide reads, in one-letter code: MKRSAVGSFFAGAHVAEAVSLAPLTTLRVGPVAQRVITCASTEQVVDVIRQLDAPAGGRGAGPLLIFAGGSNLVIADTLADLTAVRLANAGITIDGNLVRAEAGAVWDDVVVRAIEHGLGGLECLSGIPGSAGATPVQNVGAYGAEVSDTITRVRLLERSSGSVRWVSACELRFGYRTSVFKQADPSGSQPPAVVLEVEFKLDASGQSAPLHYGELVATLDATSGQRANPHAVREAVLALRVRKGMVLDAADHDTWSVGSFFTNPVVAPDVYRQLAKMVDGPVPHYPAQDGVKLAAGWLVERAGFGKGYPDGAAPCRLSTKHVLALTNRGAATAEDVVTLARTVRNGVLEVFGITLEPEPALVGCVL.

Residues 29–205 enclose the FAD-binding PCMH-type domain; sequence VGPVAQRVIT…LEVEFKLDAS (177 aa). Arg177 is a catalytic residue. The Proton donor role is filled by Ser260. Glu359 is a catalytic residue.

It belongs to the MurB family. FAD is required as a cofactor.

Its subcellular location is the cytoplasm. It carries out the reaction UDP-N-acetyl-alpha-D-muramate + NADP(+) = UDP-N-acetyl-3-O-(1-carboxyvinyl)-alpha-D-glucosamine + NADPH + H(+). Its pathway is cell wall biogenesis; peptidoglycan biosynthesis. Functionally, cell wall formation. The sequence is that of UDP-N-acetylenolpyruvoylglucosamine reductase from Mycobacterium leprae (strain Br4923).